A 273-amino-acid chain; its full sequence is Putative pyruvate, phosphate dikinase regulatory protein (273 aa).

Residue 153-160 (GVSRTSKS) participates in ADP binding.

This sequence belongs to the pyruvate, phosphate/water dikinase regulatory protein family. PDRP subfamily.

The enzyme catalyses N(tele)-phospho-L-histidyl/L-threonyl-[pyruvate, phosphate dikinase] + ADP = N(tele)-phospho-L-histidyl/O-phospho-L-threonyl-[pyruvate, phosphate dikinase] + AMP + H(+). It catalyses the reaction N(tele)-phospho-L-histidyl/O-phospho-L-threonyl-[pyruvate, phosphate dikinase] + phosphate + H(+) = N(tele)-phospho-L-histidyl/L-threonyl-[pyruvate, phosphate dikinase] + diphosphate. Its function is as follows. Bifunctional serine/threonine kinase and phosphorylase involved in the regulation of the pyruvate, phosphate dikinase (PPDK) by catalyzing its phosphorylation/dephosphorylation. The chain is Putative pyruvate, phosphate dikinase regulatory protein from Ehrlichia ruminantium (strain Welgevonden).